Here is a 542-residue protein sequence, read N- to C-terminus: Neutral amino acid transporter B(0) (542 aa).

An N-acetylmethionine modification is found at M1. Over 1 to 52 the chain is Cytoplasmic; the sequence is MVADPPRGDSKGLAAAEPTANGGLALASIEDQGEAAGGCCGSRDRVRRCLRA. The chain crosses the membrane as a helical span at residues 53–82; sequence NLLVLLTVVAVVVGVALGLGVSGAGGALAL. Topologically, residues 83 to 95 are extracellular; sequence GPERLSAFVFPGE. The chain crosses the membrane as a helical span at residues 96–117; sequence LLLRLLRMIILPLVVCSLIGGA. Over 118–131 the chain is Cytoplasmic; that stretch reads ASLDPGALGRLGAW. Residues 132–154 traverse the membrane as a helical segment; that stretch reads ALLFFLVTTLLASALGVALALAL. The Extracellular segment spans residues 155 to 225; that stretch reads QPGAASAAIN…GTRVKVPVGQ (71 aa). Residues N164 and N213 are each glycosylated (N-linked (GlcNAc...) asparagine). Residues 226–249 form a helical membrane-spanning segment; that stretch reads EVEGMNILGLVVFAIVFGVALRKL. Residues 250–258 lie on the Cytoplasmic side of the membrane; that stretch reads GPEGELLIR. A helical transmembrane segment spans residues 259 to 286; the sequence is FFNSFNEATMVLVSWIMWYAPVGIMFLV. Residues 287 to 307 are Extracellular-facing; it reads AGKIVEMEDVGLLFARLGKYI. Residues 308 to 329 form a helical membrane-spanning segment; the sequence is LCCLLGHAIHGLLVLPLIYFLF. Over 330-334 the chain is Cytoplasmic; that stretch reads TRKNP. An intramembrane region (discontinuously helical) is located at residues 335–365; the sequence is YRFLWGIVTPLATAFGTSSSSATLPLMMKCV. Topologically, residues 366-374 are cytoplasmic; the sequence is EENNGVAKH. Residues 375 to 401 form a helical membrane-spanning segment; sequence ISRFILPIGATVNMDGAALFQCVAAVF. 3 residues coordinate Na(+): G383, T385, and N387. Topologically, residues 402-414 are extracellular; the sequence is IAQLSEQSLDFVK. The discontinuously helical intramembrane region spans 415–448; sequence IITILVTATASSVGAAGIPAGGVLTLAIILEAVN. The Extracellular portion of the chain corresponds to 449–461; it reads LPVDHISLILAVD. A helical membrane pass occupies residues 462 to 483; that stretch reads WLVDRSCTVLNVEGDALGAGLL. Na(+) contacts are provided by N472 and D476. Over 484–542 the chain is Cytoplasmic; it reads QNYVDRTEVRSTEPELIQVKSELPLDPLPAPTEEGNPLLRHYRGPAGDATVASEKESVM. S494 bears the Phosphoserine mark. Residue T495 is modified to Phosphothreonine. A phosphoserine mark is found at S504, S536, and S540. Residues 509–542 form a disordered region; the sequence is DPLPAPTEEGNPLLRHYRGPAGDATVASEKESVM.

The protein belongs to the dicarboxylate/amino acid:cation symporter (DAACS) (TC 2.A.23) family. SLC1A5 subfamily. Homotrimer.

The protein localises to the cell membrane. It is found in the melanosome. It carries out the reaction L-glutamine(out) + L-serine(in) + Na(+)(out) = L-glutamine(in) + L-serine(out) + Na(+)(in). It catalyses the reaction L-glutamine(in) + L-serine(out) + Na(+)(out) = L-glutamine(out) + L-serine(in) + Na(+)(in). The catalysed reaction is L-threonine(in) + L-glutamine(out) + Na(+)(out) = L-threonine(out) + L-glutamine(in) + Na(+)(in). The enzyme catalyses L-threonine(out) + L-glutamine(in) + Na(+)(out) = L-threonine(in) + L-glutamine(out) + Na(+)(in). It carries out the reaction L-asparagine(in) + L-glutamine(out) + Na(+)(out) = L-asparagine(out) + L-glutamine(in) + Na(+)(in). It catalyses the reaction L-asparagine(out) + L-glutamine(in) + Na(+)(out) = L-asparagine(in) + L-glutamine(out) + Na(+)(in). The catalysed reaction is L-glutamine(in) + L-alanine(out) + Na(+)(out) = L-glutamine(out) + L-alanine(in) + Na(+)(in). The enzyme catalyses L-valine(out) + L-glutamine(in) + Na(+)(out) = L-valine(in) + L-glutamine(out) + Na(+)(in). It carries out the reaction L-glutamine(in) + L-methionine(out) + Na(+)(out) = L-glutamine(out) + L-methionine(in) + Na(+)(in). It catalyses the reaction L-glutamine(in) + L-glutamate(out) + Na(+)(out) + H(+)(out) = L-glutamine(out) + L-glutamate(in) + Na(+)(in) + H(+)(in). The catalysed reaction is D-serine(in) + L-glutamine(out) + Na(+)(out) = D-serine(out) + L-glutamine(in) + Na(+)(in). The enzyme catalyses D-serine(in) + L-alanine(out) + Na(+)(out) = D-serine(out) + L-alanine(in) + Na(+)(in). It carries out the reaction nitrate(in) = nitrate(out). It catalyses the reaction iodide(out) = iodide(in). The catalysed reaction is thiocyanate(in) = thiocyanate(out). Sodium-coupled antiporter of neutral amino acids. In a tri-substrate transport cycle, exchanges neutral amino acids between the extracellular and intracellular compartments, coupled to the inward cotransport of at least one sodium ion. The preferred substrate is the essential amino acid L-glutamine, a precursor for biosynthesis of proteins, nucleotides and amine sugars as well as an alternative fuel for mitochondrial oxidative phosphorylation. Exchanges L-glutamine with other neutral amino acids such as L-serine, L-threonine and L-asparagine in a bidirectional way. Provides L-glutamine to proliferating stem and activated cells driving the metabolic switch toward cell differentiation. The transport cycle is usually pH-independent, with the exception of L-glutamate. Transports extracellular L-glutamate coupled to the cotransport of one proton and one sodium ion in exchange for intracellular L-glutamine counter-ion. May provide for L-glutamate uptake in glial cells regulating glutamine/glutamate cycle in the nervous system. Can transport D-amino acids. Mediates D-serine release from the retinal glia potentially affecting NMDA receptor function in retinal neurons. Displays sodium- and amino acid-dependent but uncoupled channel-like anion conductance with a preference SCN(-) &gt;&gt; NO3(-) &gt; I(-) &gt; Cl(-). Through binding of the fusogenic protein syncytin-1/ERVW-1 may mediate trophoblasts syncytialization, the spontaneous fusion of their plasma membranes, an essential process in placental development. The chain is Neutral amino acid transporter B(0) (SLC1A5) from Macaca fascicularis (Crab-eating macaque).